The primary structure comprises 106 residues: Large ribosomal subunit protein eL42 (106 aa).

The tract at residues 26-53 (YKKGKDSLYAQGKRRYDRKQSGYGGQTK) is disordered.

It belongs to the eukaryotic ribosomal protein eL42 family. In terms of assembly, component of the large ribosomal subunit.

It localises to the cytoplasm. In terms of biological role, component of the large ribosomal subunit. The ribosome is a large ribonucleoprotein complex responsible for the synthesis of proteins in the cell. In Danio rerio (Zebrafish), this protein is Large ribosomal subunit protein eL42 (rpl36a).